The following is a 78-amino-acid chain: Keratin-associated protein 6-5 (78 aa).

Residues 3–76 (GYYGNYYGGR…GSGYGSGFGY (74 aa)) form a 25 X 2 AA repeats of G-[YCGS] region.

It belongs to the KRTAP type 6 family. In terms of assembly, interacts with hair keratins. Strong expression in narrowly defined pattern restricted to the lower and middle cortical regions of the hair shaft in both developing and cycling hair. During hair follicle regression (catagen), expression levels decrease until expression is no longer detectable in follicles at resting stage (telogen).

Functionally, in the hair cortex, hair keratin intermediate filaments are embedded in an interfilamentous matrix, consisting of hair keratin-associated proteins (KRTAP), which are essential for the formation of a rigid and resistant hair shaft through their extensive disulfide bond cross-linking with abundant cysteine residues of hair keratins. The matrix proteins include the high-sulfur and high-glycine-tyrosine keratins. The polypeptide is Keratin-associated protein 6-5 (Krtap6-5) (Mus musculus (Mouse)).